Consider the following 989-residue polypeptide: DNA-directed RNA polymerase subunit beta' (989 aa).

Positions 383, 385, and 387 each coordinate Mg(2+).

It belongs to the RNA polymerase beta' chain family. In terms of assembly, the RNAP catalytic core consists of 2 alpha, 1 beta, 1 beta' and 1 omega subunit. When a sigma factor is associated with the core the holoenzyme is formed, which can initiate transcription. The cofactor is Mg(2+).

The catalysed reaction is RNA(n) + a ribonucleoside 5'-triphosphate = RNA(n+1) + diphosphate. Its function is as follows. DNA-dependent RNA polymerase catalyzes the transcription of DNA into RNA using the four ribonucleoside triphosphates as substrates. The polypeptide is DNA-directed RNA polymerase subunit beta' (rpoC) (Leuconostoc pseudomesenteroides).